The primary structure comprises 95 residues: Aspartyl/glutamyl-tRNA(Asn/Gln) amidotransferase subunit C (95 aa).

It belongs to the GatC family. Heterotrimer of A, B and C subunits.

It carries out the reaction L-glutamyl-tRNA(Gln) + L-glutamine + ATP + H2O = L-glutaminyl-tRNA(Gln) + L-glutamate + ADP + phosphate + H(+). The enzyme catalyses L-aspartyl-tRNA(Asn) + L-glutamine + ATP + H2O = L-asparaginyl-tRNA(Asn) + L-glutamate + ADP + phosphate + 2 H(+). Allows the formation of correctly charged Asn-tRNA(Asn) or Gln-tRNA(Gln) through the transamidation of misacylated Asp-tRNA(Asn) or Glu-tRNA(Gln) in organisms which lack either or both of asparaginyl-tRNA or glutaminyl-tRNA synthetases. The reaction takes place in the presence of glutamine and ATP through an activated phospho-Asp-tRNA(Asn) or phospho-Glu-tRNA(Gln). The sequence is that of Aspartyl/glutamyl-tRNA(Asn/Gln) amidotransferase subunit C from Chlorobium phaeovibrioides (strain DSM 265 / 1930) (Prosthecochloris vibrioformis (strain DSM 265)).